A 375-amino-acid chain; its full sequence is PTS system fructose-specific EIIC component (375 aa).

The PTS EIIC type-2 domain occupies 16-370 (VKEDLMTGVS…KPNFDAKMAA (355 aa)). The next 10 helical transmembrane spans lie at 24 to 44 (VSFMIPFVTIGGIFLALGYAV), 68 to 88 (IGVAGLTLMVPVLGAYIAYAI), 93 to 113 (GLAPGFILSYIIQQGNVLQAA), 122 to 142 (GSAGAGYLGAIVAGFLAGIVA), 160 to 180 (VLLIPVATTAVLTPVMLFVLG), 203 to 223 (AILLGGILGAMMAADMGGPIN), 238 to 258 (VTAPMAAVMIAGMVPPIGLAL), 279 to 299 (VLLGFSFITEGAIPYAAADPA), 301 to 321 (VIPSVVAGSAVAGAASMALGV), and 340 to 360 (FMFIACILLGSIVTAVIATAI).

It is found in the cell membrane. Its function is as follows. The phosphoenolpyruvate-dependent sugar phosphotransferase system (sugar PTS), a major carbohydrate active transport system, catalyzes the phosphorylation of incoming sugar substrates concomitantly with their translocation across the cell membrane. The enzyme II PtfABC PTS system is involved in fructose transport. The polypeptide is PTS system fructose-specific EIIC component (Haloferax volcanii (strain ATCC 29605 / DSM 3757 / JCM 8879 / NBRC 14742 / NCIMB 2012 / VKM B-1768 / DS2) (Halobacterium volcanii)).